The sequence spans 623 residues: NAD-dependent malic enzyme, mitochondrial (623 aa).

A mitochondrion-targeting transit peptide spans 1 to 31 (MLVLCSRSRLTSSLIRRLKDQIANVSNHRSF). 2 residues coordinate fumarate: Arg-88 and Arg-122. Residue Ser-143 is the Proton donor of the active site. Arg-196 is a binding site for (S)-malate. Arg-196 serves as a coordination point for NAD(+). Lys-214 serves as the catalytic Proton acceptor. 2 residues coordinate a divalent metal cation: Glu-285 and Asp-286. An NAD(+)-binding site is contributed by Asn-289. Position 309 (Asp-309) interacts with a divalent metal cation. Ala-345 contributes to the NAD(+) binding site. 2 residues coordinate (S)-malate: Asn-464 and Asn-509.

The protein belongs to the malic enzymes family. In terms of assembly, heterodimer of two related subunits. Requires Mg(2+) as cofactor. The cofactor is Mn(2+).

The protein localises to the mitochondrion matrix. The enzyme catalyses (S)-malate + NAD(+) = pyruvate + CO2 + NADH. It participates in photosynthesis; C4 acid pathway. This is NAD-dependent malic enzyme, mitochondrial from Amaranthus hypochondriacus (Prince-of-Wales feather).